The chain runs to 334 residues: Aspartate carbamoyltransferase catalytic subunit (334 aa).

Carbamoyl phosphate contacts are provided by R71 and T72. K99 serves as a coordination point for L-aspartate. R121, H151, and Q154 together coordinate carbamoyl phosphate. Positions 184 and 239 each coordinate L-aspartate. Carbamoyl phosphate-binding residues include G280 and P281.

The protein belongs to the aspartate/ornithine carbamoyltransferase superfamily. ATCase family. As to quaternary structure, heterododecamer (2C3:3R2) of six catalytic PyrB chains organized as two trimers (C3), and six regulatory PyrI chains organized as three dimers (R2).

The enzyme catalyses carbamoyl phosphate + L-aspartate = N-carbamoyl-L-aspartate + phosphate + H(+). The protein operates within pyrimidine metabolism; UMP biosynthesis via de novo pathway; (S)-dihydroorotate from bicarbonate: step 2/3. Functionally, catalyzes the condensation of carbamoyl phosphate and aspartate to form carbamoyl aspartate and inorganic phosphate, the committed step in the de novo pyrimidine nucleotide biosynthesis pathway. The protein is Aspartate carbamoyltransferase catalytic subunit of Pseudomonas putida (strain GB-1).